The primary structure comprises 1054 residues: FERM, ARHGEF and pleckstrin domain-containing protein 2 (1054 aa).

The FERM domain occupies 44 to 324 (LHLRVKLLDN…EYHTFFRLLD (281 aa)). Phosphoserine occurs at positions 389 and 439. The disordered stretch occupies residues 421–527 (EFKDSSSSLT…GAGMDCEEPR (107 aa)). Residues 468 to 492 (PGPGLSTKSPQPSPSSRKSPLSLSP) show a composition bias toward low complexity. The region spanning 535–726 (EAYFIVKEIL…TEVTTTLQHI (192 aa)) is the DH domain. The PH 1 domain occupies 755–852 (EFIREGCLHK…WMLDLNSAIQ (98 aa)). Residues 856 to 894 (SGGDTAPALPGRTVCTRPPRSPNEVSLEQESEDDARGVR) form a disordered region. The region spanning 929-1026 (ENQLSGYLLR…WMEVIQGASS (98 aa)) is the PH 2 domain. The disordered stretch occupies residues 1029 to 1054 (GRAPSIVQDGPQPSSGLEGMVRGKEE).

As to quaternary structure, interacts with PLXNA1. Interaction with PLXNA1 or PIP5K1C lowers its guanine nucleotide exchange activity. Dissociates from PLXNA1 when SEMA3A binds to the receptor. Interacts with PIP5K1C via its FERM domain. The interaction with PIP5K1C is enhanced by SEMA3A binding. Interacts with RAC1.

In terms of biological role, functions as a guanine nucleotide exchange factor that activates RAC1. May have relatively low activity. Plays a role in the response to class 3 semaphorins and remodeling of the actin cytoskeleton. Plays a role in TNFSF11-mediated osteoclast differentiation, especially in podosome rearrangement and reorganization of the actin cytoskeleton. Regulates the activation of ITGB3, integrin signaling and cell adhesion. This is FERM, ARHGEF and pleckstrin domain-containing protein 2 (FARP2) from Homo sapiens (Human).